We begin with the raw amino-acid sequence, 753 residues long: Subtilisin-like protease SBT3.17 (753 aa).

The N-terminal stretch at 1–29 (MGNSFLIADTSSLVIGLLLILNGVFISAA) is a signal peptide. A propeptide spans 30–116 (KHYGLNKIHI…VVPSRVMRLK (87 aa)) (activation peptide). Positions 38 to 115 (HIVHLGAKQH…RVVPSRVMRL (78 aa)) constitute an Inhibitor I9 domain. The N-linked (GlcNAc...) asparagine glycan is linked to N97. The Peptidase S8 domain maps to 120-603 (TFDYLGLLPT…GGLINPEKVT (484 aa)). D150 functions as the Charge relay system in the catalytic mechanism. A glycan (N-linked (GlcNAc...) asparagine) is linked at N161. H227 acts as the Charge relay system in catalysis. N369 carries an N-linked (GlcNAc...) asparagine glycan. S534 serves as the catalytic Charge relay system. N-linked (GlcNAc...) asparagine glycans are attached at residues N639, N704, and N737.

It belongs to the peptidase S8 family.

The protein localises to the secreted. This chain is Subtilisin-like protease SBT3.17, found in Arabidopsis thaliana (Mouse-ear cress).